Here is a 65-residue protein sequence, read N- to C-terminus: Large ribosomal subunit protein bL35 (65 aa).

This sequence belongs to the bacterial ribosomal protein bL35 family.

The protein is Large ribosomal subunit protein bL35 of Prochlorococcus marinus (strain MIT 9301).